The chain runs to 355 residues: N-acylethanolamine-hydrolyzing acid amidase (355 aa).

Residues 1 to 17 (MLLLQIILLLLPVICSA) form the signal peptide. The active-site Nucleophile is Cys122. N-linked (GlcNAc...) asparagine glycosylation is found at Asn150, Asn160, and Asn328.

Belongs to the acid ceramidase family. Heterodimer of an alpha and a beta subunit, produced by autocatalytic cleavage. N-glycosylated. Post-translationally, autoproteolytic cleavage at pH 4.5 gives rise to the alpha and beta subunit. Cleavage gives rise to a conformation change that activates the enzyme. The same catalytic Cys residue mediates the autoproteolytic cleavage and subsequent hydrolysis of lipid substrates.

It is found in the lysosome. The protein resides in the membrane. The enzyme catalyses N-hexadecanoylethanolamine + H2O = ethanolamine + hexadecanoate. The catalysed reaction is an N-(long-chain fatty acyl)ethanolamine + H2O = a long-chain fatty acid + ethanolamine. It participates in lipid metabolism; fatty acid metabolism. Functionally, degrades bioactive fatty acid amides, such as N-palmitoylethanolamine, to ethanolamine and free fatty acids. This is N-acylethanolamine-hydrolyzing acid amidase from Caenorhabditis elegans.